A 552-amino-acid chain; its full sequence is Glutamine--tRNA ligase (552 aa).

A 'HIGH' region motif is present at residues 34 to 44 (PEPNGYLHIGH). Residues 35–37 (EPN) and 41–47 (HIGHAKS) each bind ATP. Residues Asp-67 and Tyr-212 each contribute to the L-glutamine site. ATP is bound by residues Thr-231, 261 to 262 (RL), and 269 to 271 (MSK). Residues 268–272 (IMSKR) carry the 'KMSKS' region motif.

This sequence belongs to the class-I aminoacyl-tRNA synthetase family. In terms of assembly, monomer.

It localises to the cytoplasm. It catalyses the reaction tRNA(Gln) + L-glutamine + ATP = L-glutaminyl-tRNA(Gln) + AMP + diphosphate. In Aliivibrio salmonicida (strain LFI1238) (Vibrio salmonicida (strain LFI1238)), this protein is Glutamine--tRNA ligase.